The primary structure comprises 190 residues: Myosin, light chain 1, alkali; skeletal, fast (190 aa).

Positions methionine 1–glutamate 17 are enriched in basic and acidic residues. Residues methionine 1–alanine 33 form a disordered region. Over residues alanine 19 to proline 28 the composition is skewed to pro residues. 2 EF-hand domains span residues aspartate 46–asparagine 81 and alanine 123–lysine 158.

Myosin is a hexamer of 2 heavy chains and 4 light chains. Does not bind calcium. In terms of tissue distribution, expressed in fast muscle fibers during skeletal muscle differentiation.

Non-regulatory myosin light chain required for proper formation and/or maintenance of myofibers, and thus appropriate muscle function. The polypeptide is Myosin, light chain 1, alkali; skeletal, fast (Danio rerio (Zebrafish)).